We begin with the raw amino-acid sequence, 357 residues long: Probable butyrate kinase 1 (357 aa).

This sequence belongs to the acetokinase family.

Its subcellular location is the cytoplasm. It carries out the reaction butanoate + ATP = butanoyl phosphate + ADP. The chain is Probable butyrate kinase 1 from Thermotoga maritima (strain ATCC 43589 / DSM 3109 / JCM 10099 / NBRC 100826 / MSB8).